Here is a 165-residue protein sequence, read N- to C-terminus: Ribosome maturation factor RimM (165 aa).

One can recognise a PRC barrel domain in the interval 94 to 165; the sequence is EDEFYIADLT…YVILNYQREA (72 aa).

This sequence belongs to the RimM family. As to quaternary structure, binds ribosomal protein uS19.

Its subcellular location is the cytoplasm. In terms of biological role, an accessory protein needed during the final step in the assembly of 30S ribosomal subunit, possibly for assembly of the head region. Essential for efficient processing of 16S rRNA. May be needed both before and after RbfA during the maturation of 16S rRNA. It has affinity for free ribosomal 30S subunits but not for 70S ribosomes. In Rickettsia rickettsii (strain Iowa), this protein is Ribosome maturation factor RimM.